The primary structure comprises 594 residues: Phostensin (594 aa).

Basic and acidic residues-rich tracts occupy residues 18 to 33 (EEAAVRGREKAERDRL) and 109 to 125 (VLGDRKAGPLEVLERRS). Disordered stretches follow at residues 18 to 238 (EEAA…PTDV) and 294 to 485 (VQDI…GKKR). Phosphoserine is present on residues serine 126, serine 134, serine 174, and serine 194. 2 stretches are compositionally biased toward basic and acidic residues: residues 133 to 155 (QSPKGRESREERLSPRESRDRRL) and 167 to 190 (SLRDWRQSPAEARDLSSRPAEAQK). Position 198 is a phosphothreonine (threonine 198). Phosphoserine is present on serine 224. Residues 353–364 (EAEEEAEKEEAE) are compositionally biased toward acidic residues. A compositionally biased stretch (pro residues) spans 403-421 (PRPPTPAPLSPPPSAPTAP). The residue at position 412 (serine 412) is a Phosphoserine. Position 437 is an N6-acetyllysine (lysine 437). A Phosphoserine modification is found at serine 510. A disordered region spans residues 531–577 (YQYPSESSVLEDLGPEPETPIAPLATQPDEEEEEEEEEEELLLQPGL). A compositionally biased stretch (acidic residues) spans 558–571 (PDEEEEEEEEEEEL).

Interacts with Protein phosphatase 1 (PP1).

It is found in the cytoplasm. Its subcellular location is the cytoskeleton. May target protein phosphatase 1 to F-actin cytoskeleton. This is Phostensin (Ppp1r18) from Mus musculus (Mouse).